Consider the following 718-residue polypeptide: Polyribonucleotide nucleotidyltransferase (718 aa).

Residues D497 and D503 each coordinate Mg(2+). Residues 564-623 (PRLLTMKIDPEQIGLVIGPGGKTIKGITEQTGSKIDIADDGTVTIAALEAEKAEKAKQII) form the KH domain. The 69-residue stretch at 633–701 (GEVYMGRVTR…AKGRLNLTRL (69 aa)) folds into the S1 motif domain.

Belongs to the polyribonucleotide nucleotidyltransferase family. It depends on Mg(2+) as a cofactor.

It is found in the cytoplasm. The catalysed reaction is RNA(n+1) + phosphate = RNA(n) + a ribonucleoside 5'-diphosphate. In terms of biological role, involved in mRNA degradation. Catalyzes the phosphorolysis of single-stranded polyribonucleotides processively in the 3'- to 5'-direction. This is Polyribonucleotide nucleotidyltransferase from Rippkaea orientalis (strain PCC 8801 / RF-1) (Cyanothece sp. (strain PCC 8801)).